Reading from the N-terminus, the 89-residue chain is U1-hexatoxin-Iw1e (89 aa).

The N-terminal stretch at 1–18 is a signal peptide; that stretch reads MLKFVVLIFVVIMASTFA. Cystine bridges form between cysteine 21-cysteine 32, cysteine 26-cysteine 40, cysteine 31-cysteine 66, cysteine 50-cysteine 74, and cysteine 68-cysteine 81. Positions 87–89 are excised as a propeptide; the sequence is RSE.

Belongs to the MIT-like AcTx family. In terms of tissue distribution, expressed by the venom gland.

The protein resides in the secreted. The chain is U1-hexatoxin-Iw1e from Illawarra wisharti (Illawarra funnel-web spider).